The chain runs to 542 residues: Homeobox and leucine zipper protein Homez (542 aa).

Residues 55–114 (WTQAIQTSELDGNEHLLQAFSYFPYPSLADIALLCLRHGLQMEKVKTWFMAQRLRCGISW) constitute a DNA-binding region (homeobox 1). A disordered region spans residues 165–193 (LSPLAPSEQPTHMKGLKVEPEEPSQVSQL). Residues Lys181 and Lys201 each participate in a glycyl lysine isopeptide (Lys-Gly) (interchain with G-Cter in SUMO2) cross-link. A disordered region spans residues 250-307 (VHQPDKPASVSLLDNSCKEESEPSGIPPSSSTSSPSFQALANGTTATPKPLQPLGCIS). The segment covering 272 to 285 (PSGIPPSSSTSSPS) has biased composition (low complexity). Over residues 286–296 (FQALANGTTAT) the composition is skewed to polar residues. Ser345 carries the post-translational modification Phosphoserine. DNA-binding regions (homeobox) lie at residues 349–409 (QHQR…KHGQ) and 443–502 (TPPL…AEVV). A Nuclear localization signal motif is present at residues 352-357 (RKTKRK). 2 disordered regions span residues 424 to 454 (FQDP…PPPD) and 501 to 542 (VVVC…IIWD). Phosphothreonine is present on Thr443. The segment covering 444–454 (PPLPAPPPPPD) has biased composition (pro residues). Positions 505–542 (LDEEDEEDEEDELPEDGEEEEEEEEDDDDGDDDVIIWD) are enriched in acidic residues.

As to quaternary structure, homodimer or heterodimer (Potential). Interacts with HOXC8. As to expression, ubiquitous. Strongly expressed in testis.

The protein resides in the nucleus. Its function is as follows. May function as a transcriptional regulator. This is Homeobox and leucine zipper protein Homez (Homez) from Mus musculus (Mouse).